A 183-amino-acid chain; its full sequence is Ribosome-recycling factor (183 aa).

This sequence belongs to the RRF family.

The protein localises to the cytoplasm. Its function is as follows. Responsible for the release of ribosomes from messenger RNA at the termination of protein biosynthesis. May increase the efficiency of translation by recycling ribosomes from one round of translation to another. The protein is Ribosome-recycling factor of Buchnera aphidicola subsp. Baizongia pistaciae (strain Bp).